The sequence spans 606 residues: MKDSMSILTQTPSETPAAHSQLHHHLSHHHHPALHHHPVLQHHYSLQQQHQQQQQQQPPAPPAVATTTVVNMSGSTTTAANLKPNRSRFMINDILAGSAAAAFYKQQQQHHHHHHQSHHNNNNHSGGSSGGTSPTHHNNNNGEGFEPPSGGAGAGAGAAAPPPPLHHLHPQSHPHPHPHPHSHPHPHALVHPHAKLAAGGGAANGLNVAQYAAAMQQHYAAAAAAAAARNSAAAAAAAAAAAASAAAAGGGGGGGLGVGGAPAGAELDDSSDYHEENEDCDSDEGGSAGGGGGGSNHMDDHSVCSNGGKDDDGNSIKSGSTSDMSGLSKKQRKARTAFTDHQLQTLEKSFERQKYLSVQERQELAHKLDLSDCQVKTWYQNRRTKWMRQTAVGLELLAEAGNFAAFQRLYGGSPYLGAWPYAAAAGAGAAAAAAHGATPHTSIDIYYRQAAAAAAMQKPLPYNLYAGVPNVGVGVGVGVGPAPFSHLSASSSLSSLSSYYQSAAAAAAAANPGGPPPPPPPSSAAAATGGSPSPIGGLIKPLAGSPTGGMPPHHPSRPDSASPPLPLPLARPPSTPSPTLNPGSPPGRSVDSCSQAQSDDEDQIQV.

Polar residues predominate over residues 1-14 (MKDSMSILTQTPSE). Disordered stretches follow at residues 1–65 (MKDS…PAVA), 104–188 (YKQQ…HPHA), 261–340 (APAG…AFTD), and 508–606 (AAAN…QIQV). Over residues 21–40 (QLHHHLSHHHHPALHHHPVL) the composition is skewed to basic residues. Residues 41-65 (QHHYSLQQQHQQQQQQQPPAPPAVA) show a composition bias toward low complexity. Basic residues predominate over residues 108-118 (QQHHHHHHQSH). Positions 119–138 (HNNNNHSGGSSGGTSPTHHN) are enriched in low complexity. A compositionally biased stretch (basic residues) spans 166 to 188 (HHLHPQSHPHPHPHPHSHPHPHA). Over residues 266–284 (ELDDSSDYHEENEDCDSDE) the composition is skewed to acidic residues. A compositionally biased stretch (gly residues) spans 286–295 (GSAGGGGGGS). Over residues 297–314 (HMDDHSVCSNGGKDDDGN) the composition is skewed to basic and acidic residues. The segment covering 315-325 (SIKSGSTSDMS) has biased composition (polar residues). Positions 331–390 (QRKARTAFTDHQLQTLEKSFERQKYLSVQERQELAHKLDLSDCQVKTWYQNRRTKWMRQT) form a DNA-binding region, homeobox. The segment covering 513 to 522 (GGPPPPPPPS) has biased composition (pro residues). Residues 523 to 534 (SAAAATGGSPSP) show a composition bias toward low complexity. Pro residues predominate over residues 561–576 (ASPPLPLPLARPPSTP).

It belongs to the Antp homeobox family. In terms of tissue distribution, abundant in the eye-antenna imaginal disk.

It is found in the nucleus. Functionally required in R1 and R6 receptor cells and primary pigment cells for normal eye development. The polypeptide is Homeobox protein B-H1 (B-H1) (Drosophila ananassae (Fruit fly)).